Reading from the N-terminus, the 315-residue chain is 4-hydroxy-3-methylbut-2-enyl diphosphate reductase (315 aa).

Cysteine 12 is a [4Fe-4S] cluster binding site. Histidine 43 and histidine 81 together coordinate (2E)-4-hydroxy-3-methylbut-2-enyl diphosphate. Residues histidine 43 and histidine 81 each contribute to the dimethylallyl diphosphate site. Isopentenyl diphosphate contacts are provided by histidine 43 and histidine 81. Residue cysteine 103 participates in [4Fe-4S] cluster binding. Histidine 131 serves as a coordination point for (2E)-4-hydroxy-3-methylbut-2-enyl diphosphate. Dimethylallyl diphosphate is bound at residue histidine 131. Histidine 131 contributes to the isopentenyl diphosphate binding site. The active-site Proton donor is glutamate 133. Residue threonine 172 coordinates (2E)-4-hydroxy-3-methylbut-2-enyl diphosphate. Cysteine 200 lines the [4Fe-4S] cluster pocket. (2E)-4-hydroxy-3-methylbut-2-enyl diphosphate contacts are provided by serine 228, asparagine 230, and serine 273. Dimethylallyl diphosphate-binding residues include serine 228, asparagine 230, and serine 273. Residues serine 228, asparagine 230, and serine 273 each contribute to the isopentenyl diphosphate site.

It belongs to the IspH family. It depends on [4Fe-4S] cluster as a cofactor.

The enzyme catalyses isopentenyl diphosphate + 2 oxidized [2Fe-2S]-[ferredoxin] + H2O = (2E)-4-hydroxy-3-methylbut-2-enyl diphosphate + 2 reduced [2Fe-2S]-[ferredoxin] + 2 H(+). The catalysed reaction is dimethylallyl diphosphate + 2 oxidized [2Fe-2S]-[ferredoxin] + H2O = (2E)-4-hydroxy-3-methylbut-2-enyl diphosphate + 2 reduced [2Fe-2S]-[ferredoxin] + 2 H(+). The protein operates within isoprenoid biosynthesis; dimethylallyl diphosphate biosynthesis; dimethylallyl diphosphate from (2E)-4-hydroxy-3-methylbutenyl diphosphate: step 1/1. It participates in isoprenoid biosynthesis; isopentenyl diphosphate biosynthesis via DXP pathway; isopentenyl diphosphate from 1-deoxy-D-xylulose 5-phosphate: step 6/6. Its function is as follows. Catalyzes the conversion of 1-hydroxy-2-methyl-2-(E)-butenyl 4-diphosphate (HMBPP) into a mixture of isopentenyl diphosphate (IPP) and dimethylallyl diphosphate (DMAPP). Acts in the terminal step of the DOXP/MEP pathway for isoprenoid precursor biosynthesis. This Exiguobacterium sibiricum (strain DSM 17290 / CCUG 55495 / CIP 109462 / JCM 13490 / 255-15) protein is 4-hydroxy-3-methylbut-2-enyl diphosphate reductase.